A 430-amino-acid polypeptide reads, in one-letter code: Lipoyl synthase, mitochondrial (430 aa).

Residues 1–37 (MATSAGKLRTLYSAHSSLSSLPPSARPTLQLATLRSY) constitute a mitochondrion transit peptide. The span at 39–55 (TTTPHDSPIGNTSNTPP) shows a compositional bias: polar residues. Residues 39-59 (TTTPHDSPIGNTSNTPPTVKR) are disordered. 7 residues coordinate [4Fe-4S] cluster: cysteine 141, cysteine 146, cysteine 152, cysteine 172, cysteine 176, cysteine 179, and serine 387. The Radical SAM core domain occupies 155–376 (GSSKSAATAT…KERALEMGFL (222 aa)).

It belongs to the radical SAM superfamily. Lipoyl synthase family. It depends on [4Fe-4S] cluster as a cofactor.

The protein resides in the mitochondrion. The catalysed reaction is [[Fe-S] cluster scaffold protein carrying a second [4Fe-4S](2+) cluster] + N(6)-octanoyl-L-lysyl-[protein] + 2 oxidized [2Fe-2S]-[ferredoxin] + 2 S-adenosyl-L-methionine + 4 H(+) = [[Fe-S] cluster scaffold protein] + N(6)-[(R)-dihydrolipoyl]-L-lysyl-[protein] + 4 Fe(3+) + 2 hydrogen sulfide + 2 5'-deoxyadenosine + 2 L-methionine + 2 reduced [2Fe-2S]-[ferredoxin]. It participates in protein modification; protein lipoylation via endogenous pathway; protein N(6)-(lipoyl)lysine from octanoyl-[acyl-carrier-protein]: step 2/2. In terms of biological role, catalyzes the radical-mediated insertion of two sulfur atoms into the C-6 and C-8 positions of the octanoyl moiety bound to the lipoyl domains of lipoate-dependent enzymes, thereby converting the octanoylated domains into lipoylated derivatives. The chain is Lipoyl synthase, mitochondrial from Ajellomyces capsulatus (strain H143) (Darling's disease fungus).